We begin with the raw amino-acid sequence, 244 residues long: Vesicle-associated membrane protein-associated protein SCS2 (244 aa).

Position 2 is an N-acetylserine (Ser-2). At 2-222 (SAVEISPDVL…EAATVPAENE (221 aa)) the chain is on the cytoplasmic side. In terms of domain architecture, MSP spans 3-126 (AVEISPDVLV…ISKKIKVKYL (124 aa)). Ser-106 is subject to Phosphoserine. The segment at 135 to 219 (QNQNIQENKE…QIKEAATVPA (85 aa)) is disordered. Over residues 153-168 (SEPKEVPAVVNEKEVP) the composition is skewed to basic and acidic residues. A compositionally biased stretch (polar residues) spans 199-211 (QTSNSTPAPQNQI). A helical; Anchor for type IV membrane protein membrane pass occupies residues 223 to 243 (SSSMGIFILVALLILVLGWFY). Position 244 (Arg-244) is a topological domain, lumenal.

Belongs to the VAMP-associated protein (VAP) (TC 9.B.17) family. Interacts with OPI1. Also interacts with PBI1. Interacts with EPO1.

It localises to the endoplasmic reticulum membrane. The protein resides in the nucleus membrane. Its function is as follows. Acts as an endoplasmic reticulum (ER) membrane anchor for cytoplasmic proteins via binding to the FFAT motif of targeted proteins. Regulates phospholipid biosynthesis by modulating the subcellular localization of the transcriptional repressor OPI1. Also contributes to the tethering of the ER to the plasma membrane. Allows interorganelle phosphatidylserine (PtdSer) transport via a process that involves the acceptor membrane complex PDR17-PDS2 that binds to PBI1 which in turn ligates to SCS2 and phosphatidic acid present in the donor membrane, forming a zone of apposition that facilitates PtdSer transfer. The chain is Vesicle-associated membrane protein-associated protein SCS2 from Saccharomyces cerevisiae (strain ATCC 204508 / S288c) (Baker's yeast).